The chain runs to 156 residues: 6,7-dimethyl-8-ribityllumazine synthase (156 aa).

5-amino-6-(D-ribitylamino)uracil contacts are provided by residues F23, 57 to 59 (AFE), and 81 to 83 (AVI). A (2S)-2-hydroxy-3-oxobutyl phosphate-binding site is contributed by 86–87 (ST). H89 (proton donor) is an active-site residue. 5-amino-6-(D-ribitylamino)uracil is bound at residue F114. Residue R128 participates in (2S)-2-hydroxy-3-oxobutyl phosphate binding.

Belongs to the DMRL synthase family.

The enzyme catalyses (2S)-2-hydroxy-3-oxobutyl phosphate + 5-amino-6-(D-ribitylamino)uracil = 6,7-dimethyl-8-(1-D-ribityl)lumazine + phosphate + 2 H2O + H(+). It functions in the pathway cofactor biosynthesis; riboflavin biosynthesis; riboflavin from 2-hydroxy-3-oxobutyl phosphate and 5-amino-6-(D-ribitylamino)uracil: step 1/2. Catalyzes the formation of 6,7-dimethyl-8-ribityllumazine by condensation of 5-amino-6-(D-ribitylamino)uracil with 3,4-dihydroxy-2-butanone 4-phosphate. This is the penultimate step in the biosynthesis of riboflavin. This chain is 6,7-dimethyl-8-ribityllumazine synthase, found in Campylobacter fetus subsp. fetus (strain 82-40).